A 317-amino-acid chain; its full sequence is tRNA dimethylallyltransferase (317 aa).

14-21 is an ATP binding site; that stretch reads GPTAVGKT. 16 to 21 provides a ligand contact to substrate; that stretch reads TAVGKT. The tract at residues 39 to 42 is interaction with substrate tRNA; that stretch reads DSMQ.

Belongs to the IPP transferase family. In terms of assembly, monomer. It depends on Mg(2+) as a cofactor.

It catalyses the reaction adenosine(37) in tRNA + dimethylallyl diphosphate = N(6)-dimethylallyladenosine(37) in tRNA + diphosphate. Its function is as follows. Catalyzes the transfer of a dimethylallyl group onto the adenine at position 37 in tRNAs that read codons beginning with uridine, leading to the formation of N6-(dimethylallyl)adenosine (i(6)A). The chain is tRNA dimethylallyltransferase from Bacillus cereus (strain AH187).